Here is a 550-residue protein sequence, read N- to C-terminus: Phospholipase B-like 1 (550 aa).

The signal sequence occupies residues 1–39 (MCHRSHGRSLRPPSPLLLLLPLLLQSPWAAGAAEKHNSA). Asparagine 72 is a glycosylation site (N-linked (GlcNAc...) (high mannose) asparagine; alternate). A glycan (N-linked (GlcNAc...) (hybrid) asparagine; alternate) is linked at asparagine 72. A propeptide spans 210–228 (LSPTKSSSLKKFKIWEMGH) (removed in mature form). 2 N-linked (GlcNAc...) (high mannose) asparagine; alternate glycosylation sites follow: asparagine 309 and asparagine 412. N-linked (GlcNAc...) (hybrid) asparagine; alternate glycans are attached at residues asparagine 309 and asparagine 412. 2 disulfides stabilise this stretch: cysteine 471–cysteine 476 and cysteine 475–cysteine 490. Asparagine 527 carries N-linked (GlcNAc...) (high mannose) asparagine; alternate glycosylation. The N-linked (GlcNAc...) (hybrid) asparagine; alternate glycan is linked to asparagine 527.

This sequence belongs to the phospholipase B-like family. May form a homodimer, each monomer is composed of a chain A and a chain B. The maturation cleavages that produces chains A and B are required to open the putative substrate binding pocket. Both chains A and B remain associated in the mature protein.

It localises to the lysosome. Functionally, exhibits weak phospholipase activity, acting on various phospholipids, including phosphatidylcholine, phosphatidylinositol, phosphatidylethanolamine and lysophospholipids. However, in view of the small size of the putative binding pocket, it has been proposed that it may act rather as an amidase or a peptidase. The polypeptide is Phospholipase B-like 1 (Plbd1) (Rattus norvegicus (Rat)).